A 439-amino-acid chain; its full sequence is Probable non-inhibitory serpin-Z9 (439 aa).

Residues Arg-12 to Pro-44 form a disordered region. The span at Ala-31–Pro-44 shows a compositional bias: pro residues. The tract at residues Gly-389–Pro-413 is RCL.

This sequence belongs to the serpin family.

This chain is Probable non-inhibitory serpin-Z9, found in Oryza sativa subsp. japonica (Rice).